Here is a 316-residue protein sequence, read N- to C-terminus: Methionyl-tRNA formyltransferase (316 aa).

112–115 (SLLP) is a (6S)-5,6,7,8-tetrahydrofolate binding site.

It belongs to the Fmt family.

It catalyses the reaction L-methionyl-tRNA(fMet) + (6R)-10-formyltetrahydrofolate = N-formyl-L-methionyl-tRNA(fMet) + (6S)-5,6,7,8-tetrahydrofolate + H(+). Functionally, attaches a formyl group to the free amino group of methionyl-tRNA(fMet). The formyl group appears to play a dual role in the initiator identity of N-formylmethionyl-tRNA by promoting its recognition by IF2 and preventing the misappropriation of this tRNA by the elongation apparatus. The protein is Methionyl-tRNA formyltransferase of Psychromonas ingrahamii (strain DSM 17664 / CCUG 51855 / 37).